A 496-amino-acid polypeptide reads, in one-letter code: Probable E3 ubiquitin-protein ligase ARI12 (496 aa).

The segment at 110–319 (NEYFCGACGE…GDLHFCTFDA (210 aa)) is TRIAD supradomain. Cys-114, Cys-117, Cys-131, His-133, Cys-136, Cys-139, Cys-162, Cys-172, Cys-240, Cys-243, His-248, Cys-253, Cys-267, Cys-270, Cys-286, and Cys-289 together coordinate Zn(2+). The RING-type 1 zinc-finger motif lies at 114–172 (CGACGESHPHKNLASVSCGHRICTRCWTSHINKIISEKPAAEWNLWLKCPVRVGLHASC). The IBR-type zinc finger occupies 191–253 (FNYNQYLLRS…REDAHSPVDC (63 aa)). The RING-type 2; atypical zinc finger occupies 267-297 (CPKCKLRIPRNQDNSLKMKCLPCNYVFCWFC).

The protein belongs to the RBR family. Ariadne subfamily. Requires Zn(2+) as cofactor. Preferentially expressed in roots.

It catalyses the reaction [E2 ubiquitin-conjugating enzyme]-S-ubiquitinyl-L-cysteine + [acceptor protein]-L-lysine = [E2 ubiquitin-conjugating enzyme]-L-cysteine + [acceptor protein]-N(6)-ubiquitinyl-L-lysine.. It functions in the pathway protein modification; protein ubiquitination. Might act as an E3 ubiquitin-protein ligase, or as part of E3 complex, which accepts ubiquitin from specific E2 ubiquitin-conjugating enzymes and then transfers it to substrates. This Arabidopsis thaliana (Mouse-ear cress) protein is Probable E3 ubiquitin-protein ligase ARI12 (ARI12).